We begin with the raw amino-acid sequence, 898 residues long: Chloride channel protein 2 (898 aa).

Residues 1 to 90 (MAAPAAAAVE…RCHKFLVSRV (90 aa)) are Cytoplasmic-facing. Residues 19-37 (QYEQTLMYGRYTQDLGAFA) are essential for channel gating by both voltage and cell volume. A Phosphothreonine modification is found at Thr23. Residues 39–52 (EEAARIRLGGPEPW) are modulates channel gating by both voltage and cell volume. The next 2 membrane-spanning stretches (helical) occupy residues 91 to 124 (GEDW…AQQW) and 133 to 158 (LLLQ…TQIL). Positions 164–168 (GSGIP) match the Selectivity filter part_1 motif. Residues 167 to 174 (IPEMKTIL) constitute an intramembrane region (helical). Helical transmembrane passes span 183-201 (LTLK…ALGS) and 208-226 (EGPF…SKFL). The Selectivity filter part_2 motif lies at 206 to 210 (GKEGP). 2 intramembrane regions (helical) span residues 242–254 (MLAA…VGCC) and 258–266 (PIGGVLFSI). 5 helical membrane-spanning segments follow: residues 278-298 (YWRG…LAVW), 324-352 (LPAF…VQVM), 361-380 (FLMR…ISTL), 432-452 (ANVF…SALA), and 460-483 (GAFM…MAAW). Positions 460 to 464 (GAFMP) match the Selectivity filter part_3 motif. An intramembrane region (helical) is located at residues 500–514 (GGYAVVGAAALAGAV). Positions 515–516 (TH) form an intramembrane region, note=Loop between two helices. The helical intramembrane region spans 517–528 (TVSTAVIVFELT). Positions 529-533 (GQIAH) form an intramembrane region, note=Loop between two helices. A helical membrane pass occupies residues 534 to 551 (ILPVMIAVILANAVAQSL). Topologically, residues 552–898 (QPSLYDSIIR…SPSDSDDKCQ (347 aa)) are cytoplasmic. Residues 587 to 645 (MVRDVPHVALSCTFRDLRLALHRTKGRTLALVESPESMILLGSIERTQVVALLAAQLSP) form the CBS 1 domain. Over residues 647–658 (RRRQSKQKRRVA) the composition is skewed to basic residues. Residues 647–675 (RRRQSKQKRRVAHTSPPSCQESPPSPETS) are disordered. The residue at position 710 (Ser710) is a Phosphoserine. Positions 726–766 (FCGSPPPEAASESEKSESSEKRKSKRVRISLASDSDLEGEM) are disordered. A compositionally biased stretch (basic and acidic residues) spans 737-746 (ESEKSESSEK). A Phosphoserine modification is found at Ser758. The region spanning 790–850 (IDPAPFQLVE…GSVTAQGVKV (61 aa)) is the CBS 2 domain. A Basolateral membrane sorting motif is present at residues 812–813 (LL). The segment at 856–898 (SFRDSATSSSDTETTEVHALWGPRSRHGLPREGSPSDSDDKCQ) is disordered.

This sequence belongs to the chloride channel (TC 2.A.49) family. ClC-2/CLCN2 subfamily. In terms of assembly, homodimer. Interacts with auxiliary subunit HEPACAM. Post-translationally, phosphorylated. Activated by dephosphorylation. In terms of tissue distribution, ubiquitously expressed.

It localises to the cell membrane. The protein resides in the basolateral cell membrane. Its subcellular location is the cell projection. It is found in the dendritic spine membrane. The protein localises to the axon. The catalysed reaction is chloride(in) = chloride(out). It catalyses the reaction thiocyanate(in) = thiocyanate(out). It carries out the reaction bromide(in) = bromide(out). The enzyme catalyses nitrate(in) = nitrate(out). The catalysed reaction is iodide(out) = iodide(in). With respect to regulation, common gate kinetics are down-regulated by intracellular ATP. Inhibited by AK-42, a derivative of meclofenamate. Inhibited by Cd(2+). Inhibited by Zn(2+) and PKC activation. Inhibited at acidic pH. CCLN2:HEPACAM channel conductance is up-regulated upon hypo-osmolarity. Voltage-gated and osmosensitive chloride channel. Forms a homodimeric channel where each subunit has its own ion conduction pathway. Conducts double-barreled currents controlled by two types of gates, two fast glutamate gates that control each subunit independently and a slow common gate that opens and shuts off both subunits simultaneously. Displays inward rectification currents activated upon membrane hyperpolarization and extracellular hypotonicity. Contributes to chloride conductance involved in neuron excitability. In hippocampal neurons, generates a significant part of resting membrane conductance and provides an additional chloride efflux pathway to prevent chloride accumulation in dendrites upon GABA receptor activation. In glia, associates with the auxiliary subunit HEPACAM/GlialCAM at astrocytic processes and myelinated fiber tracts where it may regulate transcellular chloride flux buffering extracellular chloride and potassium concentrations. Regulates aldosterone production in adrenal glands. The opening of CLCN2 channels at hyperpolarized membrane potentials in the glomerulosa causes cell membrane depolarization, activation of voltage-gated calcium channels and increased expression of aldosterone synthase, the rate-limiting enzyme for aldosterone biosynthesis. Contributes to chloride conductance in retinal pigment epithelium involved in phagocytosis of shed photoreceptor outer segments and photoreceptor renewal. Conducts chloride currents at the basolateral membrane of epithelial cells with a role in chloride reabsorption rather than secretion. Permeable to small monovalent anions with chloride &gt; thiocyanate &gt; bromide &gt; nitrate &gt; iodide ion selectivity. The protein is Chloride channel protein 2 (CLCN2) of Oryctolagus cuniculus (Rabbit).